The chain runs to 140 residues: MNLEALCKEAGLSFYDDELVSENGRKIYRIYVQKEGGVNLDDCARLSEILSPIFDVESPVNGEYFLEVSSPGLERKLSKIEHFAKSIGELVKITTNEKEKFEAKIIAVDDENITLENLENKEKTTINFNDIKKARTFVEW.

Belongs to the RimP family.

The protein resides in the cytoplasm. Functionally, required for maturation of 30S ribosomal subunits. This chain is Ribosome maturation factor RimP, found in Campylobacter jejuni subsp. jejuni serotype O:2 (strain ATCC 700819 / NCTC 11168).